We begin with the raw amino-acid sequence, 274 residues long: Glutamate--cysteine ligase regulatory subunit (274 aa).

Ser-59 carries the phosphoserine modification. Residue Lys-263 is modified to N6-acetyllysine.

The protein belongs to the aldo/keto reductase family. Glutamate--cysteine ligase light chain subfamily. In terms of assembly, heterodimer of a catalytic heavy chain and a regulatory light chain. In terms of tissue distribution, most abundant in kidney. Also found in liver and testis.

Its pathway is sulfur metabolism; glutathione biosynthesis; glutathione from L-cysteine and L-glutamate: step 1/2. The polypeptide is Glutamate--cysteine ligase regulatory subunit (Gclm) (Rattus norvegicus (Rat)).